Here is a 390-residue protein sequence, read N- to C-terminus: GTPase Obg (390 aa).

The region spanning 1 to 159 (MKFIDESLIR…RDLLLELMLL (159 aa)) is the Obg domain. In terms of domain architecture, OBG-type G spans 160-333 (ADVGMLGLPN…LCRDIMDFII (174 aa)). Residues 166–173 (GLPNAGKS), 191–195 (FTTLV), 213–216 (DIPG), 283–286 (NKID), and 314–316 (SAA) contribute to the GTP site. Mg(2+)-binding residues include Ser-173 and Thr-193.

It belongs to the TRAFAC class OBG-HflX-like GTPase superfamily. OBG GTPase family. As to quaternary structure, monomer. Mg(2+) serves as cofactor.

Its subcellular location is the cytoplasm. An essential GTPase which binds GTP, GDP and possibly (p)ppGpp with moderate affinity, with high nucleotide exchange rates and a fairly low GTP hydrolysis rate. Plays a role in control of the cell cycle, stress response, ribosome biogenesis and in those bacteria that undergo differentiation, in morphogenesis control. This chain is GTPase Obg, found in Haemophilus influenzae (strain 86-028NP).